Reading from the N-terminus, the 881-residue chain is Phosphoenolpyruvate carboxylase (881 aa).

Catalysis depends on residues His-139 and Lys-544.

Belongs to the PEPCase type 1 family. The cofactor is Mg(2+).

It carries out the reaction oxaloacetate + phosphate = phosphoenolpyruvate + hydrogencarbonate. Functionally, forms oxaloacetate, a four-carbon dicarboxylic acid source for the tricarboxylic acid cycle. This chain is Phosphoenolpyruvate carboxylase, found in Marinobacter nauticus (strain ATCC 700491 / DSM 11845 / VT8) (Marinobacter aquaeolei).